The sequence spans 411 residues: Putative competence-damage inducible protein (411 aa).

This sequence belongs to the CinA family.

The polypeptide is Putative competence-damage inducible protein (Clostridium acetobutylicum (strain ATCC 824 / DSM 792 / JCM 1419 / IAM 19013 / LMG 5710 / NBRC 13948 / NRRL B-527 / VKM B-1787 / 2291 / W)).